A 528-amino-acid chain; its full sequence is Benzoylformate decarboxylase (528 aa).

Gln-117 and Leu-118 together coordinate Mg(2+). Residues Thr-377 to Ala-460 are thiamine pyrophosphate binding. Residues Asp-428, Asn-455, and Thr-457 each contribute to the Ca(2+) site.

The protein belongs to the TPP enzyme family. In terms of assembly, homotetramer. Requires Ca(2+) as cofactor. The cofactor is thiamine diphosphate. It depends on Mg(2+) as a cofactor.

It carries out the reaction phenylglyoxylate + H(+) = benzaldehyde + CO2. It participates in aromatic compound metabolism; (R)-mandelate degradation; benzoate from (R)-mandelate: step 3/4. The polypeptide is Benzoylformate decarboxylase (mdlC) (Pseudomonas aeruginosa (strain ATCC 15692 / DSM 22644 / CIP 104116 / JCM 14847 / LMG 12228 / 1C / PRS 101 / PAO1)).